The chain runs to 426 residues: MIDLKLLRKDPQHFYEALKKRNYSTDIIDEIVNLDKEWRNQLNIVNNLKAKRNELSKLVARYKAEGKNQEAEEIIAESKKIGEEIAQYEGKQKELEEKMYNLALYIPNPPHESVPVGKDETENVEIRRWGEPRKFDFEPKAHWDLGPELGMLDFDRGSKLSGSRFTVMFGAIAKLERAIAQFMLDVHTKNGYIEVNVPHLVKRETITATGQLPKFSEELYTCERDDLFLIPTAEVSLAALHIDEILEENKLPKKYTAFTPCYRREAGSYGKDVRGLIRQHQFEKVELVWYTTPERSFEDLEQLTQDAERILQLLGLPYRVVTLCTGDLGFAAAKTYDIEVWLPSYNSYKEISSCSNVTDFQARRGNIRYRAKDGKLNYVHTLNGSGLAIGRTLVAIMENYQNPDGTITIPEVLRPYMGTDIIKPME.

232–234 (TAE) serves as a coordination point for L-serine. ATP is bound at residue 263-265 (RRE). Residue glutamate 286 participates in L-serine binding. Position 350–353 (350–353 (EISS)) interacts with ATP. Residue serine 385 participates in L-serine binding.

The protein belongs to the class-II aminoacyl-tRNA synthetase family. Type-1 seryl-tRNA synthetase subfamily. Homodimer. The tRNA molecule binds across the dimer.

It localises to the cytoplasm. It catalyses the reaction tRNA(Ser) + L-serine + ATP = L-seryl-tRNA(Ser) + AMP + diphosphate + H(+). The catalysed reaction is tRNA(Sec) + L-serine + ATP = L-seryl-tRNA(Sec) + AMP + diphosphate + H(+). It participates in aminoacyl-tRNA biosynthesis; selenocysteinyl-tRNA(Sec) biosynthesis; L-seryl-tRNA(Sec) from L-serine and tRNA(Sec): step 1/1. Catalyzes the attachment of serine to tRNA(Ser). Is also able to aminoacylate tRNA(Sec) with serine, to form the misacylated tRNA L-seryl-tRNA(Sec), which will be further converted into selenocysteinyl-tRNA(Sec). This chain is Serine--tRNA ligase, found in Fervidobacterium nodosum (strain ATCC 35602 / DSM 5306 / Rt17-B1).